The sequence spans 260 residues: Major prion protein (260 aa).

Positions 1-22 (MANLGCWMLVLFVATWSDLGLC) are cleaved as a signal peptide. Residues 23–237 (KKRPKPGGWN…ESQAYYQRGS (215 aa)) form an interaction with GRB2, ERI3 and SYN1 region. The disordered stretch occupies residues 26–112 (PKPGGWNTGG…HNQWNKPSKP (87 aa)). 6 consecutive repeat copies span residues 51–58 (PQGGGWGQ), 59–66 (PHGGGWGQ), 67–74 (PHGGGWGQ), 75–82 (PHGGGWGQ), 83–90 (PHGGGWGQ), and 91–98 (PHGGGWGQ). Positions 51–98 (PQGGGWGQPHGGGWGQPHGGGWGQPHGGGWGQPHGGGWGQPHGGGWGQ) are 6 X 8 AA tandem repeats of P-H-G-G-G-W-G-Q. The segment covering 52-102 (QGGGWGQPHGGGWGQPHGGGWGQPHGGGWGQPHGGGWGQPHGGGWGQGGGT) has biased composition (gly residues). Positions 68, 69, 70, 76, 77, 78, 84, 85, 86, 92, 93, and 94 each coordinate Cu(2+). A disulfide bridge links C186 with C221. N-linked (GlcNAc...) asparagine glycans are attached at residues N188 and N204. S237 carries GPI-anchor amidated serine lipidation. A propeptide spans 238–260 (SMVLFSSPPVILLISFLIFLIVG) (removed in mature form).

This sequence belongs to the prion family. As to quaternary structure, monomer and homodimer. Has a tendency to aggregate into amyloid fibrils containing a cross-beta spine, formed by a steric zipper of superposed beta-strands. Soluble oligomers may represent an intermediate stage on the path to fibril formation. Copper binding may promote oligomerization. Interacts with GRB2, APP, ERI3/PRNPIP and SYN1. Mislocalized cytosolically exposed PrP interacts with MGRN1; this interaction alters MGRN1 subcellular location and causes lysosomal enlargement. Interacts with KIAA1191.

The protein resides in the cell membrane. It is found in the golgi apparatus. Functionally, its primary physiological function is unclear. Has cytoprotective activity against internal or environmental stresses. May play a role in neuronal development and synaptic plasticity. May be required for neuronal myelin sheath maintenance. May play a role in iron uptake and iron homeostasis. Soluble oligomers are toxic to cultured neuroblastoma cells and induce apoptosis (in vitro). Association with GPC1 (via its heparan sulfate chains) targets PRNP to lipid rafts. Also provides Cu(2+) or Zn(2+) for the ascorbate-mediated GPC1 deaminase degradation of its heparan sulfate side chains. The polypeptide is Major prion protein (PRNP) (Saimiri sciureus (Common squirrel monkey)).